Consider the following 321-residue polypeptide: MNQVNFLNLDKNILIITSGGDAPGMNASLISLIHRLMNNNFNVFIGIEGLLGLYNNLIEPIKDKRVFDVYFNEQGTVIKTSRFIKLDINDKKTQIIKDNLLSHNIQKIIILGGQGSMQAGLVLTKMGFEVFGILHTIDNDFSETQMCIGALSAASFNQKLLKCLNYTAKAHCAFNLVELMGRECSWLVNNSVGKLKPILMLTNQDNKYTVDEVIDLIKDKINSIKEYDPLIIVQELIYDQKWYELLVKTFEQKLHKSLRITILNYLQRGAPVSDFDLQLAKDSANVLVDFIVNQNDIKNTNNMYVVINKFDNKLEVIKFNK.

ATP-binding positions include G20 and R82–F83. Substrate contacts are provided by residues T136 to D138, M180 to R182, E235, R259, and Y265 to R268. D138 functions as the Proton acceptor in the catalytic mechanism.

The protein belongs to the phosphofructokinase type A (PFKA) family. In terms of assembly, homotetramer. Requires Mg(2+) as cofactor.

The protein resides in the cytoplasm. The enzyme catalyses beta-D-fructose 6-phosphate + ATP = beta-D-fructose 1,6-bisphosphate + ADP + H(+). The protein operates within carbohydrate degradation; glycolysis; D-glyceraldehyde 3-phosphate and glycerone phosphate from D-glucose: step 3/4. Catalyzes the phosphorylation of D-fructose 6-phosphate to fructose 1,6-bisphosphate by ATP, the first committing step of glycolysis. In Ureaplasma parvum serovar 3 (strain ATCC 700970), this protein is Probable ATP-dependent 6-phosphofructokinase (pfkA).